The chain runs to 534 residues: Cytochrome P450 monooxygenase btcB (534 aa).

N-linked (GlcNAc...) asparagine glycosylation occurs at Asn20. A helical transmembrane segment spans residues 41–61; it reads ALAFLCGALLFGFVYSVFYNL. 3 N-linked (GlcNAc...) asparagine glycosylation sites follow: Asn335, Asn413, and Asn431. Cys484 provides a ligand contact to heme.

It belongs to the cytochrome P450 family. Heme is required as a cofactor.

It is found in the membrane. It functions in the pathway secondary metabolite biosynthesis; terpenoid biosynthesis. Its function is as follows. Cytochrome P4590 monooxygenase part of the gene cluster that mediates the biosynthesis of betaestacins. The bifunctional terpene synthase btcA converts isopentenyl diphosphate (IPP) and dimethylallyl diphosphate (DMAPP) into the sesterterpene betaestacin I. The C-terminal prenyltransferase (PT) domain of btcA catalyzes formation of GFPP, whereas the N-terminal terpene cyclase (TC) domain catalyzes the cyclization of GFPP into betaestacin I. The cytochrome P450 monooxygenase btcB oxidizes the C25 methyl group of betaestacin I to yield the carboxylic acid betaestacin IV via the alcohol betaestacin III. The cytochrome P450 monooxygenase btcC further catalyzes the multistep oxidation of betaestacin IV to produce several compounds, including betaestacins Va, Vb, Vc and VI. This Colletotrichum orbiculare (strain 104-T / ATCC 96160 / CBS 514.97 / LARS 414 / MAFF 240422) (Cucumber anthracnose fungus) protein is Cytochrome P450 monooxygenase btcB.